Here is a 261-residue protein sequence, read N- to C-terminus: uncharacterized protein (261 aa).

This is an uncharacterized protein from Bacillus subtilis (strain 168).